The primary structure comprises 383 residues: tRNA-specific 2-thiouridylase MnmA (383 aa).

Residues 29 to 36 and Met55 each bind ATP; that span reads GMSGGVDS. Residues 115-117 are interaction with target base in tRNA; sequence NPD. The active-site Nucleophile is Cys120. Cysteines 120 and 217 form a disulfide. Gly145 serves as a coordination point for ATP. The segment at 167–169 is interaction with tRNA; it reads KDQ. Cys217 functions as the Cysteine persulfide intermediate in the catalytic mechanism. Residues 329 to 330 form an interaction with tRNA region; it reads RY.

This sequence belongs to the MnmA/TRMU family.

It is found in the cytoplasm. The enzyme catalyses S-sulfanyl-L-cysteinyl-[protein] + uridine(34) in tRNA + AH2 + ATP = 2-thiouridine(34) in tRNA + L-cysteinyl-[protein] + A + AMP + diphosphate + H(+). In terms of biological role, catalyzes the 2-thiolation of uridine at the wobble position (U34) of tRNA, leading to the formation of s(2)U34. The sequence is that of tRNA-specific 2-thiouridylase MnmA from Pasteurella multocida (strain Pm70).